Here is a 330-residue protein sequence, read N- to C-terminus: Probable integrase/recombinase protein MJ0367 (330 aa).

Positions 22–112 (IEETDKIKEY…LLKVFYRVLR (91 aa)) constitute a Core-binding (CB) domain. Residues 136 to 325 (QHYDAVDAEM…RAESLEFIKK (190 aa)) form the Tyr recombinase domain. Active-site residues include arginine 177, lysine 202, histidine 275, arginine 278, and histidine 301. Catalysis depends on tyrosine 310, which acts as the O-(3'-phospho-DNA)-tyrosine intermediate.

The protein belongs to the 'phage' integrase family.

The polypeptide is Probable integrase/recombinase protein MJ0367 (Methanocaldococcus jannaschii (strain ATCC 43067 / DSM 2661 / JAL-1 / JCM 10045 / NBRC 100440) (Methanococcus jannaschii)).